The following is a 128-amino-acid chain: Large ribosomal subunit protein bL17 (128 aa).

This sequence belongs to the bacterial ribosomal protein bL17 family. As to quaternary structure, part of the 50S ribosomal subunit. Contacts protein L32.

In Streptococcus pneumoniae serotype 2 (strain D39 / NCTC 7466), this protein is Large ribosomal subunit protein bL17.